The sequence spans 131 residues: Transcriptional activatory protein CaiF (131 aa).

Its function is as follows. Potential transcriptional activator of carnitine metabolism. This chain is Transcriptional activatory protein CaiF (caiF), found in Escherichia coli (strain K12).